Reading from the N-terminus, the 226-residue chain is 7-cyano-7-deazaguanine synthase (226 aa).

Residue 10–20 (LSGGLDSATAA) coordinates ATP. Zn(2+)-binding residues include Cys191, Cys199, Cys202, and Cys205.

This sequence belongs to the QueC family. The cofactor is Zn(2+).

It carries out the reaction 7-carboxy-7-deazaguanine + NH4(+) + ATP = 7-cyano-7-deazaguanine + ADP + phosphate + H2O + H(+). Its pathway is purine metabolism; 7-cyano-7-deazaguanine biosynthesis. Its function is as follows. Catalyzes the ATP-dependent conversion of 7-carboxy-7-deazaguanine (CDG) to 7-cyano-7-deazaguanine (preQ(0)). This Parasynechococcus marenigrum (strain WH8102) protein is 7-cyano-7-deazaguanine synthase.